Here is a 233-residue protein sequence, read N- to C-terminus: MADS-box transcription factor 56 (233 aa).

In terms of domain architecture, MADS-box spans 1-61; the sequence is MVRGRTELKR…GRLYEFASAP (61 aa). The region spanning 87–177 is the K-box domain; that stretch reads IQQVKDDTLG…RGKHRNLEAA (91 aa).

It is found in the nucleus. Functionally, probable transcription factor. This chain is MADS-box transcription factor 56 (MADS56), found in Oryza sativa subsp. indica (Rice).